A 764-amino-acid chain; its full sequence is 1,4-alpha-glucan branching enzyme GlgB (764 aa).

D434 (nucleophile) is an active-site residue. E487 (proton donor) is an active-site residue.

It belongs to the glycosyl hydrolase 13 family. GlgB subfamily. In terms of assembly, monomer.

The catalysed reaction is Transfers a segment of a (1-&gt;4)-alpha-D-glucan chain to a primary hydroxy group in a similar glucan chain.. Its pathway is glycan biosynthesis; glycogen biosynthesis. In terms of biological role, catalyzes the formation of the alpha-1,6-glucosidic linkages in glycogen by scission of a 1,4-alpha-linked oligosaccharide from growing alpha-1,4-glucan chains and the subsequent attachment of the oligosaccharide to the alpha-1,6 position. In Nostoc sp. (strain PCC 7120 / SAG 25.82 / UTEX 2576), this protein is 1,4-alpha-glucan branching enzyme GlgB.